The following is a 589-amino-acid chain: Protein MICRORCHIDIA 3 (589 aa).

The segment at 1–33 (MAPESKNAGVSVVVNLDSDSDSDNDDGVGGRGA) is disordered. The stretch at 542-589 (MRCEEYVKKETELEQTVSNLAKELEETKSKCARLALLVDAKRREMQQV) forms a coiled coil.

The protein belongs to the MORC ATPase protein family. As to quaternary structure, homodimer and heterodimer. Component of an RNA-directed DNA methylation (RdDM) complex. It depends on Mg(2+) as a cofactor. Mn(2+) serves as cofactor.

The protein resides in the nucleus. Exhibits ATPase activity. Binds DNA/RNA in a non-specific manner and exhibits endonuclease activity. Probably involved in DNA repair. Involved in RNA-directed DNA methylation (RdDM) as a component of the RdDM machinery and required for gene silencing. May also be involved in the regulation of chromatin architecture to maintain gene silencing. In Arabidopsis thaliana (Mouse-ear cress), this protein is Protein MICRORCHIDIA 3.